Here is a 506-residue protein sequence, read N- to C-terminus: MEEFKRNLELDRSQQHDFIYPLIFQEYIYALAHDRGLNRSIFLENTGYENKSSLLIVKRLIIHLITQMYQQNHFLFSGNDSNQNKFLGYNTNLYSQMIFEGFAVVVEIPFYLRLLSFLEGKERVKSHNLRSIHSIFPFLEDKFSHLVYVLDILISHPIHLEIVIQTLRYWVKDASSLHLLRFFLHEYPIWNSLITPKKSSFSFSIRNQRFFLFLYNFHVCEYESIFVFLRNQSSHLRSISSETFLERISFYRKIELEVFTKDFKAIIWVFKEPFLHYVRYRGKAILASKGTSLLMNKWKYYLVNFWQCYFYMWSQPRRIHINQLSNHSLDFLGYLSTVRLKPLMVRSQMIENSFIIENASKKFDTLMPITPMIRSLSKAKFCNVLGHPMSKPVWAALSDSDIIERFGRIYRNLSHYYSGSLKKMSLYRIKYILRLSCARTLARKHKSTVRAFLKRLGVGLLEEFFTEEEQVFYLTFAKASSNSGELYQRRVWYLDIICINDLANYE.

The protein belongs to the intron maturase 2 family. MatK subfamily.

Its subcellular location is the plastid. The protein resides in the chloroplast. In terms of biological role, usually encoded in the trnK tRNA gene intron. Probably assists in splicing its own and other chloroplast group II introns. This Rhododendron ferrugineum (Alpenrose) protein is Maturase K.